The chain runs to 68 residues: Copper transport protein ATOX1 (68 aa).

The HMA domain occupies 1–63 (MPKHEFSVDM…TLKKTGKTVS (63 aa)). 2 residues coordinate Cu cation: Cys12 and Cys15. Ser47 carries the post-translational modification Phosphoserine. N6-acetyllysine is present on Lys60.

The protein belongs to the ATX1 family. Homodimer. Interacts with ATP7B. Interacts with ATP7A. Interacts (via dimer form) with SLC31A1 (via C-terminal domain); this interaction improves ATOX1 stability and controls intracellular Cu(I) levels. Ubiquitous.

Binds and deliver cytosolic copper to the copper ATPase proteins. May be important in cellular antioxidant defense. The polypeptide is Copper transport protein ATOX1 (Homo sapiens (Human)).